The following is a 248-amino-acid chain: Triosephosphate isomerase (248 aa).

Residues asparagine 10 and lysine 12 each coordinate substrate. Histidine 95 serves as the catalytic Electrophile. Glutamate 165 acts as the Proton acceptor in catalysis.

The protein belongs to the triosephosphate isomerase family. In terms of assembly, homodimer.

The enzyme catalyses D-glyceraldehyde 3-phosphate = dihydroxyacetone phosphate. The protein operates within carbohydrate biosynthesis; gluconeogenesis. It functions in the pathway carbohydrate degradation; glycolysis; D-glyceraldehyde 3-phosphate from glycerone phosphate: step 1/1. This is Triosephosphate isomerase (TPI1) from Kluyveromyces lactis (strain ATCC 8585 / CBS 2359 / DSM 70799 / NBRC 1267 / NRRL Y-1140 / WM37) (Yeast).